The primary structure comprises 670 residues: ATP-dependent DNA helicase Rep (670 aa).

The UvrD-like helicase ATP-binding domain maps to 1–277 (MLFNEHQKKA…IIMQHNYRSS (277 aa)). Residues 22–29 (AGAGSGKT) and Arg275 each bind ATP. Residues 278–562 (GRILKVANAL…QLMTLHASKG (285 aa)) enclose the UvrD-like helicase C-terminal domain.

Belongs to the helicase family. UvrD subfamily. In terms of assembly, homodimer.

The catalysed reaction is Couples ATP hydrolysis with the unwinding of duplex DNA by translocating in the 3'-5' direction.. The enzyme catalyses ATP + H2O = ADP + phosphate + H(+). In terms of biological role, rep helicase is a single-stranded DNA-dependent ATPase involved in DNA replication; it can initiate unwinding at a nick in the DNA. It binds to the single-stranded DNA and acts in a progressive fashion along the DNA in the 3' to 5' direction. The protein is ATP-dependent DNA helicase Rep of Buchnera aphidicola subsp. Baizongia pistaciae (strain Bp).